Consider the following 192-residue polypeptide: Cytidylate kinase (192 aa).

7-15 (GPPGSGKST) contacts ATP.

This sequence belongs to the cytidylate kinase family. Type 2 subfamily.

It localises to the cytoplasm. It catalyses the reaction CMP + ATP = CDP + ADP. The enzyme catalyses dCMP + ATP = dCDP + ADP. The polypeptide is Cytidylate kinase (Halorubrum lacusprofundi (strain ATCC 49239 / DSM 5036 / JCM 8891 / ACAM 34)).